Consider the following 526-residue polypeptide: ATP synthase subunit alpha (526 aa).

Position 171–178 (171–178 (GDRQTGKT)) interacts with ATP.

It belongs to the ATPase alpha/beta chains family. As to quaternary structure, F-type ATPases have 2 components, CF(1) - the catalytic core - and CF(0) - the membrane proton channel. CF(1) has five subunits: alpha(3), beta(3), gamma(1), delta(1), epsilon(1). CF(0) has four main subunits: a(1), b(1), b'(1) and c(9-12).

Its subcellular location is the cell inner membrane. It carries out the reaction ATP + H2O + 4 H(+)(in) = ADP + phosphate + 5 H(+)(out). Produces ATP from ADP in the presence of a proton gradient across the membrane. The alpha chain is a regulatory subunit. This chain is ATP synthase subunit alpha, found in Chlorobium phaeobacteroides (strain DSM 266 / SMG 266 / 2430).